Consider the following 167-residue polypeptide: UPF0225 protein VV1_2912 (167 aa).

It belongs to the UPF0225 family.

This chain is UPF0225 protein VV1_2912, found in Vibrio vulnificus (strain CMCP6).